The sequence spans 1067 residues: FHIP family protein GL19323 (1067 aa).

The segment covering 1–11 (MSWLRSSPLRQ) has biased composition (polar residues). Disordered stretches follow at residues 1–31 (MSWLRSSPLRQSGNGGGGGVSTGHSSTGSLR), 503–525 (LARPKSVHEQQPPSGATGEQPIQ), and 832–1013 (NENS…SEPA). A phosphoserine mark is found at serine 508 and serine 835. The segment covering 842-858 (QPQTTLSQQQQQQQGQQ) has biased composition (low complexity). Over residues 859–878 (RSAYATLSAATPVQATQTSA) the composition is skewed to polar residues. Low complexity predominate over residues 893–904 (SKSISSMFSRRS). The segment covering 918–949 (LVGNNNSGSGQSQPFSSTGTGTCETSLSTNPQ) has biased composition (polar residues). Residues 950–979 (SGAAAARSTGTATTANGNSSNSNISIGGST) show a composition bias toward low complexity. The span at 980 to 996 (QTLSGHSNTTTYSSSTL) shows a compositional bias: polar residues.

Belongs to the FHIP family.

This chain is FHIP family protein GL19323, found in Drosophila persimilis (Fruit fly).